A 68-amino-acid chain; its full sequence is MALGLSQVASQAASQTLDTAMAGSLTRAAGAQAQKIALDTENSILDGQMDSASKSLNSGQKAAKAIQF.

Belongs to the HrpA type 2 family.

It localises to the secreted. Its subcellular location is the fimbrium. Its function is as follows. Major structure protein of the hrp pilus, which is a component of the type III secretion system (T3SS, Hrp secretion system) required for effector protein delivery, parasitism, and pathogenicity. The hrp pilus functions as a conduit for protein delivery into the host cell. The chain is Hrp pili protein HrpA (hrpA) from Pectobacterium atrosepticum (strain SCRI 1043 / ATCC BAA-672) (Erwinia carotovora subsp. atroseptica).